The primary structure comprises 328 residues: Phosphate acyltransferase (328 aa).

The protein belongs to the PlsX family. Homodimer. Probably interacts with PlsY.

It localises to the cytoplasm. The catalysed reaction is a fatty acyl-[ACP] + phosphate = an acyl phosphate + holo-[ACP]. The protein operates within lipid metabolism; phospholipid metabolism. Its function is as follows. Catalyzes the reversible formation of acyl-phosphate (acyl-PO(4)) from acyl-[acyl-carrier-protein] (acyl-ACP). This enzyme utilizes acyl-ACP as fatty acyl donor, but not acyl-CoA. This is Phosphate acyltransferase from Staphylococcus aureus (strain bovine RF122 / ET3-1).